The chain runs to 433 residues: Probable exopolygalacturonase X (433 aa).

An N-terminal signal peptide occupies residues 1–21; sequence MKLTQATTLLLSLGLSLPVEG. Residues 30–54 are disordered; that stretch reads VGPKPPFRPLPASTPRNKTCQVQSN. Residues 43 to 54 show a composition bias toward polar residues; the sequence is TPRNKTCQVQSN. N-linked (GlcNAc...) asparagine glycans are attached at residues Asn-46, Asn-127, and Asn-197. The PbH1 1 repeat unit spans residues 229–250; the sequence is SSNIVIQNSVINNGDDCVSFKP. Asp-243 functions as the Proton donor in the catalytic mechanism. Cys-245 and Cys-262 are disulfide-bonded. 2 N-linked (GlcNAc...) asparagine glycosylation sites follow: Asn-251 and Asn-263. The PbH1 2 repeat unit spans residues 252 to 272; that stretch reads STEILVQNLHCNGSHGISVGS. His-266 is an active-site residue. N-linked (GlcNAc...) asparagine glycosylation is found at Asn-290, Asn-295, Asn-327, Asn-352, and Asn-362. A PbH1 3 repeat occupies 325 to 346; sequence VQNITYDKMYIENVDWAIEVTQ. The stretch at 360–403 is one PbH1 4 repeat; that stretch reads PSNLTISDVYFNDLTGVTSGKNDPNVGTIICSSPDVCSGIHATN. A disulfide bridge connects residues Cys-390 and Cys-396.

This sequence belongs to the glycosyl hydrolase 28 family.

The protein localises to the secreted. The catalysed reaction is [(1-&gt;4)-alpha-D-galacturonosyl](n) + H2O = alpha-D-galacturonate + [(1-&gt;4)-alpha-D-galacturonosyl](n-1). Specific in hydrolyzing the terminal glycosidic bond of polygalacturonic acid and oligogalacturonates. This Aspergillus flavus (strain ATCC 200026 / FGSC A1120 / IAM 13836 / NRRL 3357 / JCM 12722 / SRRC 167) protein is Probable exopolygalacturonase X (pgaX).